Consider the following 145-residue polypeptide: Probable D-aminoacyl-tRNA deacylase (145 aa).

The protein belongs to the DTD family. In terms of assembly, homodimer.

It is found in the cytoplasm. It catalyses the reaction glycyl-tRNA(Ala) + H2O = tRNA(Ala) + glycine + H(+). The enzyme catalyses a D-aminoacyl-tRNA + H2O = a tRNA + a D-alpha-amino acid + H(+). Functionally, an aminoacyl-tRNA editing enzyme that deacylates mischarged D-aminoacyl-tRNAs. Also deacylates mischarged glycyl-tRNA(Ala), protecting cells against glycine mischarging by AlaRS. Acts via tRNA-based rather than protein-based catalysis; rejects L-amino acids rather than detecting D-amino acids in the active site. By recycling D-aminoacyl-tRNA to D-amino acids and free tRNA molecules, this enzyme counteracts the toxicity associated with the formation of D-aminoacyl-tRNA entities in vivo and helps enforce protein L-homochirality. The sequence is that of Probable D-aminoacyl-tRNA deacylase from Shigella flexneri serotype 5b (strain 8401).